A 1071-amino-acid chain; its full sequence is V-type proton ATPase catalytic subunit A (1071 aa).

Residue Ala2 is modified to N-acetylalanine. The residue at position 131 (Thr131) is a Phosphothreonine. 257-264 (GAFGCGKT) is a binding site for ATP. In terms of domain architecture, DOD-type homing endonuclease spans 494–642 (LLGLWIGDGL…LVSLARSLGL (149 aa)). Phosphoserine is present on residues Ser858 and Ser928.

The protein belongs to the ATPase alpha/beta chains family. V-ATPase is a heteromultimeric enzyme composed of a peripheral catalytic V1 complex (components A to H) attached to an integral membrane V0 proton pore complex (components: a, c, c', c'', d, e, f and VOA1). Interacts with RAV1 and RAV2 components of the RAVE complex, which are essential for the stability and assembly of V-ATPase. Post-translationally, this protein undergoes a protein self splicing that involves a post-translational excision of the VDE intervening region (intein) followed by peptide ligation.

The protein resides in the vacuole membrane. The enzyme catalyses ATP + H2O + 4 H(+)(in) = ADP + phosphate + 5 H(+)(out). Its function is as follows. Catalytic subunit of the V1 complex of vacuolar(H+)-ATPase (V-ATPase), a multisubunit enzyme composed of a peripheral complex (V1) that hydrolyzes ATP and a membrane integral complex (V0) that translocates protons. V-ATPase is responsible for acidifying and maintaining the pH of intracellular compartments. Functionally, PI-SceI is an endonuclease that can cleave at a site present in a VMA1 allele that lacks the derived endonuclease segment of the open reading frame; cleavage at this site only occurs during meiosis and initiates 'homing', a genetic event that converts a VMA1 allele lacking VDE into one that contains it. The sequence is that of V-type proton ATPase catalytic subunit A from Saccharomyces cerevisiae (strain ATCC 204508 / S288c) (Baker's yeast).